The following is a 391-amino-acid chain: Oxytocin receptor (391 aa).

Residues 1-38 lie on the Extracellular side of the membrane; it reads MEGAFAANWSAEAVNGSAAPPGTEGNRTAGPPQRNEAL. N-linked (GlcNAc...) asparagine glycans are attached at residues Asn8, Asn15, and Asn26. The helical transmembrane segment at 39–63 threads the bilayer; sequence ARVEVAVLCLILFLALSGNACVLLA. Residues 64–74 lie on the Cytoplasmic side of the membrane; the sequence is LRTTRHKHSRL. The helical transmembrane segment at 75-97 threads the bilayer; that stretch reads FFFMKHLSIADLVVAVFQVLPQL. Topologically, residues 98–113 are extracellular; sequence LWDITFRFYGPDLLCR. A disulfide bond links Cys112 and Cys187. The helical transmembrane segment at 114 to 135 threads the bilayer; that stretch reads LVKYLQVVGMFASTYLLLLMSL. The Cytoplasmic portion of the chain corresponds to 136 to 154; it reads DRCLAICQPLRSLSRRTDR. A helical transmembrane segment spans residues 155–175; that stretch reads LAVLVTWLGCLVASAPQVHIF. Residues 176–202 lie on the Extracellular side of the membrane; the sequence is SLREVADGVFDCWAVFIQPWGPKAYIT. The chain crosses the membrane as a helical span at residues 203–225; that stretch reads WITLAVYIVPVIVLATCYGLISF. At 226-277 the chain is on the cytoplasmic side; sequence KIWQNLRLKTAAAAAEAAAGAEGEAADWAGRAILARVSNVKLISKAKIRTVK. The helical transmembrane segment at 278 to 296 threads the bilayer; it reads MTFIVVLAFIVCWTPFFFV. At 297–311 the chain is on the extracellular side; it reads QMWSVWDADAPKEAS. Residues 312-334 traverse the membrane as a helical segment; that stretch reads PFIIAMLLASLNSCCNPWIYMLF. The Cytoplasmic segment spans residues 335-391; sequence TGHLFQELVQRFLCCSFRRLKGSRPGETSVSKKSNSSTFVLSQYSSSQRRCSQPSTL. 2 positions are modified to phosphoserine: Ser368 and Ser370.

It belongs to the G-protein coupled receptor 1 family. Vasopressin/oxytocin receptor subfamily.

The protein resides in the cell membrane. Its function is as follows. Receptor for oxytocin. The activity of this receptor is mediated by G proteins which activate a phosphatidylinositol-calcium second messenger system. In Bos taurus (Bovine), this protein is Oxytocin receptor (OXTR).